The chain runs to 204 residues: Oxidoreductase iacF (204 aa).

It belongs to the oxidoreductase OpS7 family.

The protein operates within secondary metabolite biosynthesis. Oxidoreductase; part of the gene cluster that mediates the biosynthesis of iso-A82775C, a enylepoxycyclohexane and biosynthetic precursor of the chloropestolide anticancer natural products. Within the cluster, the prenyltransferase iacE prenylates siccayne to generate pestalodiol E, using dimethylallyl diphosphate (DMAPP) as cosubstrate. The probable oxidoreductase iacF is then involved in the epoxidation of pestalodiol F to pestalodiol F, which is further converted to pestalofone A by the short-chain dehydrogenase/reductase iacG. Iso-A82775C is subsequently generated from pestalofone A by the short-chain dehydrogenase/reductase iacC. Iso-A82775C is further condensed with maldoxin via a Diels-Alder reaction to produce the anticancer natural products chloropestolides A to E. This Pestalotiopsis fici (strain W106-1 / CGMCC3.15140) protein is Oxidoreductase iacF.